The chain runs to 65 residues: Large ribosomal subunit protein bL35 (65 aa).

Belongs to the bacterial ribosomal protein bL35 family.

The sequence is that of Large ribosomal subunit protein bL35 from Karelsulcia muelleri (strain GWSS) (Sulcia muelleri).